A 185-amino-acid polypeptide reads, in one-letter code: Vomeronasal secretory protein 2 (185 aa).

The N-terminal stretch at 1-19 (MKSLLLTVTLSSLVATLQT) is a signal peptide. Residues C80 and C172 are joined by a disulfide bond.

The protein belongs to the calycin superfamily. Lipocalin family. In terms of tissue distribution, specifically expressed in vomeronasal and posterior glands of the nasal septum, the ducts of which open into the lumen of the vomeronasal organ.

The protein resides in the secreted. Functionally, transport of lipophilic molecules, possible pheromone-carrier. The protein is Vomeronasal secretory protein 2 (Lcn4) of Mus musculus (Mouse).